The primary structure comprises 244 residues: Rho-related GTP-binding protein RhoE (244 aa).

30 to 37 (GDSQCGKT) lines the GTP pocket. Residues 52–60 (YVPTVFENY) carry the Effector region motif. Residues 77–81 (DTSGS) and 135–138 (CKSD) each bind GTP. Residue C241 is modified to Cysteine methyl ester. A lipid anchor (S-farnesyl cysteine) is attached at C241. The propeptide at 242–244 (TVM) is removed in mature form.

It belongs to the small GTPase superfamily. Rho family. In terms of assembly, binds ROCK1. Interacts with UBXD5. As to expression, ubiquitous.

It localises to the golgi apparatus membrane. Functionally, binds GTP but lacks intrinsic GTPase activity and is resistant to Rho-specific GTPase-activating proteins. This chain is Rho-related GTP-binding protein RhoE (RND3), found in Homo sapiens (Human).